The chain runs to 398 residues: Cytochrome b (398 aa).

4 consecutive transmembrane segments (helical) span residues 38 to 58, 82 to 104, 119 to 139, and 185 to 205; these read FGPLAGICLVIQIVTGVFLAM, WFLRYMHANGASMFLIVVHFHMF, VRCSGVVIFLLMIVTAFIGYV, and FFSLHYLLPFLLVGASILHLG. Heme b is bound by residues H88 and H102. Residues H189 and H203 each coordinate heme b. Residue H208 participates in a ubiquinone binding. Transmembrane regions (helical) follow at residues 231 to 251, 295 to 316, 328 to 348, and 355 to 374; these read YYVKDLVGWVAFAIFSSIFIF, AGGVAAIAPVFICLLALPFLNQ, IYHIIYLLFLADRLLLGWIGC, and FVTIGQISPFVFFLFFAIMP.

The protein belongs to the cytochrome b family. The main subunits of complex b-c1 are: cytochrome b, cytochrome c1 and the Rieske protein. Heme b serves as cofactor.

It is found in the mitochondrion inner membrane. Its function is as follows. Component of the ubiquinol-cytochrome c reductase complex (complex III or cytochrome b-c1 complex) that is part of the mitochondrial respiratory chain. The b-c1 complex mediates electron transfer from ubiquinol to cytochrome c. Contributes to the generation of a proton gradient across the mitochondrial membrane that is then used for ATP synthesis. In Daucus carota (Wild carrot), this protein is Cytochrome b (MT-CYB).